Reading from the N-terminus, the 677-residue chain is DNA ligase (677 aa).

NAD(+) is bound by residues 43–47 (DHVYD), 92–93 (SM), and E122. The active-site N6-AMP-lysine intermediate is the K124. Positions 145, 179, 295, and 319 each coordinate NAD(+). Zn(2+)-binding residues include C413, C416, C431, and C436. One can recognise a BRCT domain in the interval 599-677 (TSDSYFNGKT…EADLDNYLAQ (79 aa)).

Belongs to the NAD-dependent DNA ligase family. LigA subfamily. Requires Mg(2+) as cofactor. The cofactor is Mn(2+).

The enzyme catalyses NAD(+) + (deoxyribonucleotide)n-3'-hydroxyl + 5'-phospho-(deoxyribonucleotide)m = (deoxyribonucleotide)n+m + AMP + beta-nicotinamide D-nucleotide.. In terms of biological role, DNA ligase that catalyzes the formation of phosphodiester linkages between 5'-phosphoryl and 3'-hydroxyl groups in double-stranded DNA using NAD as a coenzyme and as the energy source for the reaction. It is essential for DNA replication and repair of damaged DNA. The chain is DNA ligase from Latilactobacillus sakei subsp. sakei (strain 23K) (Lactobacillus sakei subsp. sakei).